The chain runs to 1080 residues: Adenylate cyclase type 7 (1080 aa).

Residues 1–33 are Cytoplasmic-facing; the sequence is MPAKGRYFLNEGEEGPDQDALYEKYQLTSQHGP. 6 helical membrane-spanning segments follow: residues 34-54, 63-83, 95-117, 122-142, 147-167, and 176-196; these read LLLT…IIAF, QAIL…SVLM, ALAL…DAWT, AWEQ…LLPF, AVAV…SLMG, and VGLQ…TGAF. Topologically, residues 197-594 are cytoplasmic; that stretch reads HKHQMQDASR…YRLAPIPRAR (398 aa). A Guanylate cyclase 1 domain is found at 279-406; that stretch reads SILYADIVGF…HDVSLANRME (128 aa). Residues Asp284, Ile285, and Asp328 each contribute to the Mg(2+) site. ATP is bound by residues 284–289, 326–328, and Arg372; these read DIVGFT and LGD. Residues 454-474 are disordered; the sequence is DPRSQQPPPPSQHLPRPKGDA. Residues 477-482 are mediates regulation of adenylate cyclase activity by C5 alpha-induced G- beta and gamma pathway; sequence KMRASV. The tract at residues 491-499 is mediates regulation of adenylate cyclase activity by sphingosine 1-phosphate-induced G alpha 13 pathway; that stretch reads WGAARPFAH. The tract at residues 504 to 546 is disordered; the sequence is ESVSSGETHVPNGRRPKSVPQRHRRTPDRSMSPKGRSEDDSYD. The tract at residues 506–584 is modulates adenylate cyclase activity by modulating the binding of G(s)alpha to the high-affinity G(s)alpha binding site in 7C1a/7C2; sequence VSSGETHVPN…IFLEKGFERE (79 aa). Residues 515-529 show a composition bias toward basic residues; it reads NGRRPKSVPQRHRRT. 3 consecutive transmembrane segments (helical) span residues 595–615, 620–640, and 669–688; these read HDFA…VLLM, ALGV…GLCF, and LTLA…INLP. An N-linked (GlcNAc...) asparagine glycan is attached at Asn701. The next 2 helical transmembrane spans lie at 718 to 737 and 746 to 773; these read PLPY…SVFL and VLLT…CGQG. 2 N-linked (GlcNAc...) asparagine glycosylation sites follow: Asn776 and Asn781. Residues 794-814 traverse the membrane as a helical segment; that stretch reads DLKTMTNFYLVLFYITLLTLS. The Cytoplasmic portion of the chain corresponds to 815–1080; it reads RQIDYYCRLD…TAKFQGLGLN (266 aa). A Guanylate cyclase 2 domain is found at 879–1023; it reads CVMFASVPDF…NTVNVASRME (145 aa). Residues Lys931, 1010 to 1012, 1017 to 1021, and Lys1057 each bind ATP; these read DIW and NVASR.

Belongs to the adenylyl cyclase class-4/guanylyl cyclase family. Mg(2+) is required as a cofactor. Mn(2+) serves as cofactor. In terms of processing, phosphorylated by PRKCD.

It localises to the membrane. The enzyme catalyses ATP = 3',5'-cyclic AMP + diphosphate. With respect to regulation, activated by the G protein alpha subunit. Activated by the G protein beta and gamma subunit complex. Activated by GNA13 and GNA12. Ethanol and phorbol 12,13-dibutanoate significantly potentiate adenylate cyclase activity generated in response to the activation of the prostanoid receptor by the agonist prostaglandin E1(1-) in a PKC-dependent manner. Inhibited by lithium. In terms of biological role, catalyzes the formation of cAMP in response to activation of G protein-coupled receptors. Functions in signaling cascades activated namely by thrombin and sphingosine 1-phosphate and mediates regulation of cAMP synthesis through synergistic action of the stimulatory G alpha protein with GNA13. Also, during inflammation, mediates zymosan-induced increase intracellular cAMP, leading to protein kinase A pathway activation in order to modulate innate immune responses through heterotrimeric G proteins G(12/13). Functions in signaling cascades activated namely by dopamine and C5 alpha chain and mediates regulation of cAMP synthesis through synergistic action of the stimulatory G protein with G beta:gamma complex. Functions, through cAMP response regulation, to keep inflammation under control during bacterial infection by sensing the presence of serum factors, such as the bioactive lysophospholipid (LPA) that regulate LPS-induced TNF-alpha production. However, it is also required for the optimal functions of B and T cells during adaptive immune responses by regulating cAMP synthesis in both B and T cells. In Homo sapiens (Human), this protein is Adenylate cyclase type 7.